Here is a 355-residue protein sequence, read N- to C-terminus: S-adenosylmethionine:tRNA ribosyltransferase-isomerase (355 aa).

The protein belongs to the QueA family. Monomer.

It is found in the cytoplasm. It carries out the reaction 7-aminomethyl-7-carbaguanosine(34) in tRNA + S-adenosyl-L-methionine = epoxyqueuosine(34) in tRNA + adenine + L-methionine + 2 H(+). Its pathway is tRNA modification; tRNA-queuosine biosynthesis. Its function is as follows. Transfers and isomerizes the ribose moiety from AdoMet to the 7-aminomethyl group of 7-deazaguanine (preQ1-tRNA) to give epoxyqueuosine (oQ-tRNA). This Aeromonas salmonicida (strain A449) protein is S-adenosylmethionine:tRNA ribosyltransferase-isomerase.